A 218-amino-acid polypeptide reads, in one-letter code: DNA-directed RNA polymerase III subunit RPC7-like (218 aa).

Residues 130-218 (TIILPKRPPK…SDDNMDEAIY (89 aa)) form a disordered region. Residues 139–160 (KSTDDKEETIQKLETLEKKEEE) are compositionally biased toward basic and acidic residues. 2 stretches are compositionally biased toward acidic residues: residues 161-193 (VTSEEDEEKEEEEEKEEGEEEEYDEEEHEEETD) and 201-218 (NGEDFGGDSDDNMDEAIY).

Belongs to the eukaryotic RPC7 RNA polymerase subunit family. As to quaternary structure, component of the RNA polymerase III (Pol III) complex consisting of 17 subunits. Pol III exists as two alternative complexes defined by the mutually exclusive incorporation of subunit POLR3G/RPC7alpha or POLR3GL/RPC7beta. Found in a trimeric complex with POLR3C/RPC3 and POLR3F/RPC6. Directly interacts with POLR3C. In terms of tissue distribution, expressed in the liver.

Its subcellular location is the nucleus. DNA-dependent RNA polymerase catalyzes the transcription of DNA into RNA using the four ribonucleoside triphosphates as substrates. Specific peripheric component of RNA polymerase III which synthesizes small RNAs, such as 5S rRNA and tRNAs. This Mus musculus (Mouse) protein is DNA-directed RNA polymerase III subunit RPC7-like.